The sequence spans 72 residues: uncharacterized protein (72 aa).

Belongs to the asfivirus I73R family.

It is found in the virion. This is an uncharacterized protein from Ornithodoros (relapsing fever ticks).